The primary structure comprises 896 residues: UPF0182 protein GM21_2279 (896 aa).

7 helical membrane-spanning segments follow: residues 6–26 (MTFILVAIAVIFPFIGYLLSF), 46–66 (VYAQTGAGLIFGLLLFAFLQL), 99–119 (LVRPVGILISLVLAFLAGNWG), 158–180 (LLKSFAGFMVLAASVLSAAAYYV), 201–221 (LAVLVGLFGLVVAAGFYLESF), 245–265 (TLRILTFLTPVAGVVLALGIW), and 271–291 (LALGPPVVIVALYLVGVRVYP).

The protein belongs to the UPF0182 family.

It is found in the cell membrane. The chain is UPF0182 protein GM21_2279 from Geobacter sp. (strain M21).